Consider the following 1001-residue polypeptide: DNA topoisomerase 3-alpha (1001 aa).

The Toprim domain maps to 35-179; that stretch reads KVLCVAEKND…NLQVLRARFS (145 aa). The Topo IA-type catalytic domain maps to 197–617; sequence DQRVSDAVDV…QQVQKYKQVF (421 aa). Tyr-362 (O-(5'-phospho-DNA)-tyrosine intermediate) is an active-site residue. The tract at residues 400-424 is disordered; it reads GGPTPRNGNKSDQAHPPIHPTKYTN. Residues 658–685 form a C4-type zinc finger; sequence CPQCNKDMVLKTKKNGGFYLSCMGFPEC. Over residues 774-792 the composition is skewed to polar residues; the sequence is RMDNSQHPQPADSRQTGSS. A disordered region spans residues 774-810; sequence RMDNSQHPQPADSRQTGSSKALAQTLPPPTAAGESNS. Residues Cys-813, Cys-815, Cys-838, Cys-843, Cys-897, Cys-899, Cys-922, and Cys-930 each coordinate Zn(2+). 2 GRF-type zinc fingers span residues 813 to 852 and 897 to 939; these read CNCG…ADSP and CLCS…VDEN. Residues 937–1001 are disordered; it reads DENTAPGTSG…HTRPFCPQNR (65 aa). Basic and acidic residues predominate over residues 953–964; it reads DRGRTLESEARS.

It belongs to the type IA topoisomerase family. In terms of assembly, binds ssDNA. Interacts (via N-terminal region) with BLM; the interaction is direct. Directly interacts with RMI1. Component of the RMI complex, containing at least TOP3A, RMI1 and RMI2. The RMI complex interacts with BLM. Requires Mg(2+) as cofactor. As to expression, high expression is found in testis, heart, skeletal muscle and pancreas.

It localises to the mitochondrion matrix. It catalyses the reaction ATP-independent breakage of single-stranded DNA, followed by passage and rejoining.. Its function is as follows. Releases the supercoiling and torsional tension of DNA introduced during the DNA replication and transcription by transiently cleaving and rejoining one strand of the DNA duplex. Introduces a single-strand break via transesterification at a target site in duplex DNA. The scissile phosphodiester is attacked by the catalytic tyrosine of the enzyme, resulting in the formation of a DNA-(5'-phosphotyrosyl)-enzyme intermediate and the expulsion of a 3'-OH DNA strand. The free DNA strand then undergoes passage around the unbroken strand thus removing DNA supercoils. Finally, in the religation step, the DNA 3'-OH attacks the covalent intermediate to expel the active-site tyrosine and restore the DNA phosphodiester backbone. As an essential component of the RMI complex it is involved in chromosome separation and the processing of homologous recombination intermediates to limit DNA crossover formation in cells. Has DNA decatenation activity. It is required for mtDNA decatenation and segregation after completion of replication, in a process that does not require BLM, RMI1 and RMI2. This is DNA topoisomerase 3-alpha (TOP3A) from Homo sapiens (Human).